The chain runs to 510 residues: GMP synthase [glutamine-hydrolyzing] (510 aa).

In terms of domain architecture, Glutamine amidotransferase type-1 spans 5–195; the sequence is LVFIIDFGGQ…LFNICELKGD (191 aa). The active-site Nucleophile is C82. Catalysis depends on residues H169 and E171. In terms of domain architecture, GMPS ATP-PPase spans 196-385; that stretch reads WSVTSFAEEK…LGIPHKLVWR (190 aa). 223–229 provides a ligand contact to ATP; the sequence is SGGVDSS.

In terms of assembly, homodimer.

The enzyme catalyses XMP + L-glutamine + ATP + H2O = GMP + L-glutamate + AMP + diphosphate + 2 H(+). Its pathway is purine metabolism; GMP biosynthesis; GMP from XMP (L-Gln route): step 1/1. Functionally, catalyzes the synthesis of GMP from XMP. This Clostridium tetani (strain Massachusetts / E88) protein is GMP synthase [glutamine-hydrolyzing].